Here is an 88-residue protein sequence, read N- to C-terminus: Large ribosomal subunit protein bL31B (88 aa).

The protein belongs to the bacterial ribosomal protein bL31 family. Type B subfamily. As to quaternary structure, part of the 50S ribosomal subunit.

This Leuconostoc citreum (strain KM20) protein is Large ribosomal subunit protein bL31B.